Here is a 101-residue protein sequence, read N- to C-terminus: Venom peptide Pc (101 aa).

A signal peptide spans 1 to 20 (MSHLRIAVIFLCTLFALTAG).

This sequence belongs to the scorpion La1-like peptide family. Contains 4 disulfide bonds. As to expression, expressed by the venom gland.

The protein localises to the secreted. This is Venom peptide Pc from Pandinus cavimanus (Tanzanian red clawed scorpion).